Consider the following 131-residue polypeptide: Protein Turandot M (131 aa).

The N-terminal stretch at 1–23 is a signal peptide; the sequence is MNPTIYLSCLMVFSVFLLGKVNA.

This sequence belongs to the Turandot family.

The protein localises to the secreted. Its function is as follows. A humoral factor that may play a role in stress tolerance. Requires Mekk1 expression in the fat body to regulate response to septic injury and consequent immune response. The polypeptide is Protein Turandot M (Drosophila melanogaster (Fruit fly)).